A 358-amino-acid chain; its full sequence is L-lysine 3-hydroxylase (358 aa).

The Fe cation site is built by His-178, Glu-180, and His-314. Arg-328 contributes to the 2-oxoglutarate binding site.

It belongs to the clavaminate synthase family. The cofactor is Fe(2+).

It carries out the reaction L-lysine + 2-oxoglutarate + O2 = (3S)-3-hydroxy-L-lysine + succinate + CO2. Functionally, alpha-ketoglutarate-dependent dioxygenase that in vitro catalyzes the regio- and stereoselective hydroxylation of L-lysine, leading to (3S)-3-hydroxy-L-lysine. Can also use (5R)-5-hydroxy-L-lysine as substrate, but neither D-lysine nor L-ornithine. This Catenulispora acidiphila (strain DSM 44928 / JCM 14897 / NBRC 102108 / NRRL B-24433 / ID139908) protein is L-lysine 3-hydroxylase.